Reading from the N-terminus, the 566-residue chain is Unconventional myosin-VIIa (566 aa).

One can recognise a Myosin motor domain in the interval 67 to 566; the sequence is MMEDMIQHLG…AGVVYYESQG (500 aa). 160 to 167 is a binding site for ATP; it reads GESGAGKT.

It belongs to the TRAFAC class myosin-kinesin ATPase superfamily. Myosin family. In terms of assembly, might homodimerize in a two headed molecule through the formation of a coiled-coil rod. Identified in a complex with USH1C and USH1G. Interacts with MYRIP. Interacts with RPE65. Interacts with CIB2. May interact with CALM. Interacts with WHRN. Interacts with PLEKHB1 (via PH domain). Interacts with PCDH15. Interacts with TWF2. Interacts with USH1G. Interacts with MYH9. Interacts (via MyTH4-FERM domains) with cytoplasmic regions of ADGRV1 and USH2A. Interacts with PDZD7 (via MyTH4-FERM domains). Interacts with CALML4.

It is found in the cytoplasm. The protein resides in the cell cortex. Its subcellular location is the cytoskeleton. The protein localises to the synapse. Its function is as follows. Myosins are actin-based motor molecules with ATPase activity. Unconventional myosins serve in intracellular movements. Their highly divergent tails bind to membranous compartments, which are then moved relative to actin filaments. In the retina, plays an important role in the renewal of the outer photoreceptor disks. Plays an important role in the distribution and migration of retinal pigment epithelial (RPE) melanosomes and phagosomes, and in the regulation of opsin transport in retinal photoreceptors. In the inner ear, plays an important role in differentiation, morphogenesis and organization of cochlear hair cell bundles. Motor protein that is a part of the functional network formed by USH1C, USH1G, CDH23 and MYO7A that mediates mechanotransduction in cochlear hair cells. Required for normal hearing. Involved in hair-cell vesicle trafficking of aminoglycosides, which are known to induce ototoxicity. This is Unconventional myosin-VIIa (MYO7A) from Sus scrofa (Pig).